A 219-amino-acid polypeptide reads, in one-letter code: GTP-binding protein drn-1 (219 aa).

GTP contacts are provided by residues 37-44 (GAGGVGKS), 56-62 (NENYVPT), 85-89 (DTTGS), 146-149 (NKKD), and 177-178 (AK). Residues 59–67 (YVPTIEDTY) carry the Effector region motif. Cysteine 216 is modified (cysteine methyl ester). A lipid anchor (S-geranylgeranyl cysteine) is attached at cysteine 216. Positions 217-219 (HIM) are cleaved as a propeptide — removed in mature form.

This sequence belongs to the small GTPase superfamily. Di-Ras family. Interacts with epac-1 (via C-terminus). In terms of tissue distribution, expressed specifically in neurons including the nerve ring, ventral and dorsal nerve cord motor neurons and tail ganglia.

It localises to the cell membrane. Displays low GTPase activity and exists predominantly in the GTP-bound form. Together with epac-1, may regulate acetylcholine release at the neuromuscular junctions probably downstream of G-protein gsa-1 and adenylate cyclase acy-1. In Caenorhabditis elegans, this protein is GTP-binding protein drn-1.